The chain runs to 525 residues: Glutamate--cysteine ligase (525 aa).

This sequence belongs to the glutamate--cysteine ligase type 1 family. Type 1 subfamily.

The enzyme catalyses L-cysteine + L-glutamate + ATP = gamma-L-glutamyl-L-cysteine + ADP + phosphate + H(+). It participates in sulfur metabolism; glutathione biosynthesis; glutathione from L-cysteine and L-glutamate: step 1/2. This is Glutamate--cysteine ligase from Vibrio vulnificus (strain CMCP6).